Reading from the N-terminus, the 647-residue chain is DNA ligase (647 aa).

NAD(+) contacts are provided by residues 30–34 (DEEYD), 79–80 (SM), and E105. The active-site N6-AMP-lysine intermediate is the K107. NAD(+) contacts are provided by R128, E162, and K301. 4 residues coordinate Zn(2+): C395, C398, C411, and C416. One can recognise a BRCT domain in the interval 570–647 (KSDSVIFGKT…ESAFNELVKE (78 aa)).

It belongs to the NAD-dependent DNA ligase family. LigA subfamily. It depends on Mg(2+) as a cofactor. The cofactor is Mn(2+).

The catalysed reaction is NAD(+) + (deoxyribonucleotide)n-3'-hydroxyl + 5'-phospho-(deoxyribonucleotide)m = (deoxyribonucleotide)n+m + AMP + beta-nicotinamide D-nucleotide.. DNA ligase that catalyzes the formation of phosphodiester linkages between 5'-phosphoryl and 3'-hydroxyl groups in double-stranded DNA using NAD as a coenzyme and as the energy source for the reaction. It is essential for DNA replication and repair of damaged DNA. The polypeptide is DNA ligase (Campylobacter jejuni subsp. doylei (strain ATCC BAA-1458 / RM4099 / 269.97)).